The sequence spans 181 residues: Adenylyl-sulfate kinase (181 aa).

Residue Gly-20–Ser-27 coordinates ATP. Ser-94 (phosphoserine intermediate) is an active-site residue.

This sequence belongs to the APS kinase family.

It carries out the reaction adenosine 5'-phosphosulfate + ATP = 3'-phosphoadenylyl sulfate + ADP + H(+). It functions in the pathway sulfur metabolism; hydrogen sulfide biosynthesis; sulfite from sulfate: step 2/3. Functionally, catalyzes the synthesis of activated sulfate. This Deinococcus deserti (strain DSM 17065 / CIP 109153 / LMG 22923 / VCD115) protein is Adenylyl-sulfate kinase.